The sequence spans 569 residues: Urease subunit alpha (569 aa).

The Urease domain maps to glycine 131 to leucine 569. Positions 136, 138, and 219 each coordinate Ni(2+). Lysine 219 carries the N6-carboxylysine modification. A substrate-binding site is contributed by histidine 221. Residues histidine 248 and histidine 274 each coordinate Ni(2+). The Proton donor role is filled by histidine 322. Ni(2+) is bound at residue aspartate 362.

This sequence belongs to the metallo-dependent hydrolases superfamily. Urease alpha subunit family. In terms of assembly, heterotrimer of UreA (gamma), UreB (beta) and UreC (alpha) subunits. Three heterotrimers associate to form the active enzyme. Ni cation serves as cofactor. Post-translationally, carboxylation allows a single lysine to coordinate two nickel ions.

Its subcellular location is the cytoplasm. It carries out the reaction urea + 2 H2O + H(+) = hydrogencarbonate + 2 NH4(+). Its pathway is nitrogen metabolism; urea degradation; CO(2) and NH(3) from urea (urease route): step 1/1. In Prochlorococcus marinus (strain NATL1A), this protein is Urease subunit alpha.